A 182-amino-acid chain; its full sequence is Small ribosomal subunit protein uS4c (182 aa).

The region spanning 82–143 (MRLDNILFRL…KQRSKALIQN (62 aa)) is the S4 RNA-binding domain.

It belongs to the universal ribosomal protein uS4 family. Part of the 30S ribosomal subunit. Contacts protein S5. The interaction surface between S4 and S5 is involved in control of translational fidelity.

The protein localises to the plastid. It is found in the chloroplast. One of the primary rRNA binding proteins, it binds directly to 16S rRNA where it nucleates assembly of the body of the 30S subunit. Functionally, with S5 and S12 plays an important role in translational accuracy. The sequence is that of Small ribosomal subunit protein uS4c (rps4) from Isophysis tasmanica.